The chain runs to 548 residues: Poly(ADP-ribose) glycohydrolase 1 (548 aa).

The protein belongs to the poly(ADP-ribose) glycohydrolase family.

It catalyses the reaction [(1''-&gt;2')-ADP-alpha-D-ribose](n) + H2O = [(1''-&gt;2')-ADP-alpha-D-ribose](n-1) + ADP-D-ribose. Poly(ADP-ribose) synthesized after DNA damage is only present transiently and is rapidly degraded by poly(ADP-ribose) glycohydrolase. Involved in establishing period length of the circadian oscillator. May regulate post-translational poly(ADP-ribosyl)ation of an oscillator component. This is Poly(ADP-ribose) glycohydrolase 1 (PARG1) from Arabidopsis thaliana (Mouse-ear cress).